The primary structure comprises 128 residues: Ribonuclease P protein component 4 (128 aa).

4 residues coordinate Zn(2+): Cys67, Cys70, Cys96, and Cys99.

The protein belongs to the eukaryotic/archaeal RNase P protein component 4 family. In terms of assembly, consists of a catalytic RNA component and at least 4-5 protein subunits. Requires Zn(2+) as cofactor.

The protein localises to the cytoplasm. The catalysed reaction is Endonucleolytic cleavage of RNA, removing 5'-extranucleotides from tRNA precursor.. Part of ribonuclease P, a protein complex that generates mature tRNA molecules by cleaving their 5'-ends. The chain is Ribonuclease P protein component 4 from Methanopyrus kandleri (strain AV19 / DSM 6324 / JCM 9639 / NBRC 100938).